The chain runs to 198 residues: Beta-crystallin A1 (198 aa).

Residues 1–13 form an N-terminal arm region; the sequence is MLYLVLFLVPFNS. Beta/gamma crystallin 'Greek key' domains lie at 14–53 and 54–100; these read IQIT…KVEC and GAWI…RPIC. 2 positions are modified to S-glutathionyl cysteine; alternate: C65 and C100. C65 and C100 each carry S-methylcysteine; alternate. Positions 101–106 are connecting peptide; sequence SANHKE. 2 consecutive Beta/gamma crystallin 'Greek key' domains span residues 107–148 and 149–197; these read SKIT…KIQC and GAWV…RRIQ.

The protein belongs to the beta/gamma-crystallin family. As to quaternary structure, homo/heterodimer, or complexes of higher-order. The structure of beta-crystallin oligomers seems to be stabilized through interactions between the N-terminal arms. Interacts with CRYBA1.

Crystallins are the dominant structural components of the vertebrate eye lens. This Mus musculus (Mouse) protein is Beta-crystallin A1.